Reading from the N-terminus, the 566-residue chain is Bacillolysin (566 aa).

A signal peptide spans 1 to 27; sequence MKKKSLALVLATGMAVTTFGGTGSAFA. The propeptide at 28 to 249 is activation peptide; sequence DSKNVLSTKK…KQDAKAVVKP (222 aa). The Ca(2+) site is built by aspartate 307, aspartate 309, valine 311, and aspartate 388. Histidine 392 is a Zn(2+) binding site. Glutamate 393 is a catalytic residue. 2 residues coordinate Zn(2+): histidine 396 and glutamate 416. Ca(2+)-binding residues include glutamate 427, asparagine 433, aspartate 435, glutamate 437, glutamate 440, tyrosine 443, threonine 444, lysine 447, and aspartate 450. The active-site Proton donor is the histidine 481.

The protein belongs to the peptidase M4 family. Ca(2+) serves as cofactor. It depends on Zn(2+) as a cofactor.

The protein localises to the secreted. The catalysed reaction is Similar, but not identical, to that of thermolysin.. Extracellular zinc metalloprotease. This Bacillus cereus protein is Bacillolysin (npr).